The primary structure comprises 316 residues: Zinc finger protein 367 (316 aa).

The tract at residues 61–97 (VTLGPGSGSGAASPTRTSSSPAEADPLSCPEHLKDGI) is disordered. A compositionally biased stretch (low complexity) spans 70–82 (GAASPTRTSSSPA). 2 C2H2-type zinc fingers span residues 121–143 (IRCN…KRTH) and 149–173 (YLCD…QRLH). The disordered stretch occupies residues 234 to 294 (QTREQRSPVP…GGVVTARRRL (61 aa)). Acidic residues predominate over residues 255-278 (EDQEQQDPLDFLPSDEGEEEEQEE). Residues 289 to 313 (TARRRLQEQRERLHGALALIELANN) adopt a coiled-coil conformation.

This sequence belongs to the krueppel C2H2-type zinc-finger protein family.

The protein resides in the nucleus. Transcriptional activator. The protein is Zinc finger protein 367 (znf367) of Danio rerio (Zebrafish).